Reading from the N-terminus, the 346-residue chain is N-acetyl-gamma-glutamyl-phosphate reductase (346 aa).

Residue C149 is part of the active site.

This sequence belongs to the NAGSA dehydrogenase family. Type 1 subfamily.

It localises to the cytoplasm. The enzyme catalyses N-acetyl-L-glutamate 5-semialdehyde + phosphate + NADP(+) = N-acetyl-L-glutamyl 5-phosphate + NADPH + H(+). The protein operates within amino-acid biosynthesis; L-arginine biosynthesis; N(2)-acetyl-L-ornithine from L-glutamate: step 3/4. Functionally, catalyzes the NADPH-dependent reduction of N-acetyl-5-glutamyl phosphate to yield N-acetyl-L-glutamate 5-semialdehyde. The polypeptide is N-acetyl-gamma-glutamyl-phosphate reductase (Desulfotalea psychrophila (strain LSv54 / DSM 12343)).